We begin with the raw amino-acid sequence, 350 residues long: DNA polymerase IV (350 aa).

Residues 4–185 form the UmuC domain; that stretch reads IIHIDMDCFY…LPLGKLPGIG (182 aa). The Mg(2+) site is built by D8 and D103. Residue E104 is part of the active site.

The protein belongs to the DNA polymerase type-Y family. In terms of assembly, monomer. Mg(2+) is required as a cofactor.

It is found in the cytoplasm. The catalysed reaction is DNA(n) + a 2'-deoxyribonucleoside 5'-triphosphate = DNA(n+1) + diphosphate. Poorly processive, error-prone DNA polymerase involved in untargeted mutagenesis. Copies undamaged DNA at stalled replication forks, which arise in vivo from mismatched or misaligned primer ends. These misaligned primers can be extended by PolIV. Exhibits no 3'-5' exonuclease (proofreading) activity. May be involved in translesional synthesis, in conjunction with the beta clamp from PolIII. In Aeromonas hydrophila subsp. hydrophila (strain ATCC 7966 / DSM 30187 / BCRC 13018 / CCUG 14551 / JCM 1027 / KCTC 2358 / NCIMB 9240 / NCTC 8049), this protein is DNA polymerase IV.